The following is a 109-amino-acid chain: MEQFETIAVAQAQQMLAQGQALLLDIRDAQSYAAGHVPGALHLTDATLPALMRQHDGVQPVMVMCYHGNSSRGAAQYLLHQGFDEVYSIDGGFDAWQRAYPEEVARGGD.

Residues 17–105 (AQGQALLLDI…WQRAYPEEVA (89 aa)) form the Rhodanese domain. Cys-65 (cysteine persulfide intermediate) is an active-site residue.

The protein belongs to the GlpE family.

It localises to the cytoplasm. It catalyses the reaction thiosulfate + hydrogen cyanide = thiocyanate + sulfite + 2 H(+). It carries out the reaction thiosulfate + [thioredoxin]-dithiol = [thioredoxin]-disulfide + hydrogen sulfide + sulfite + 2 H(+). Transferase that catalyzes the transfer of sulfur from thiosulfate to thiophilic acceptors such as cyanide or dithiols. May function in a CysM-independent thiosulfate assimilation pathway by catalyzing the conversion of thiosulfate to sulfite, which can then be used for L-cysteine biosynthesis. The polypeptide is Thiosulfate sulfurtransferase GlpE (Edwardsiella ictaluri (strain 93-146)).